The following is a 176-amino-acid chain: Protein MOTHER of FT and TFL1 homolog 1 (176 aa).

This sequence belongs to the phosphatidylethanolamine-binding protein family.

In terms of biological role, may form complexes with phosphorylated ligands by interfering with kinases and their effectors. This Oryza sativa subsp. japonica (Rice) protein is Protein MOTHER of FT and TFL1 homolog 1.